Here is a 665-residue protein sequence, read N- to C-terminus: Cinnamate reductase (665 aa).

FMN is bound at residue Gln-109. Tyr-182 (proton donor) is an active-site residue. Residues Arg-230, Arg-319, and 341–342 (GR) contribute to the FMN site. [4Fe-4S] cluster contacts are provided by Cys-365, Cys-368, Cys-372, and Cys-384. FAD is bound by residues Ala-415, Glu-434, Asn-442, Lys-452, and Ala-479.

It in the N-terminal section; belongs to the NADH:flavin oxidoreductase/NADH oxidase family. FMN is required as a cofactor. FAD serves as cofactor. Requires [4Fe-4S] cluster as cofactor.

The catalysed reaction is 3-phenylpropanoate + NAD(+) = (E)-cinnamate + NADH + H(+). Its pathway is amino-acid degradation; L-phenylalanine degradation. In terms of biological role, involved in the fermentation of L-phenylalanine via a Stickland reaction. Catalyzes the reduction of (E)-cinnamate to yield 3-phenylpropionate. The chain is Cinnamate reductase from Clostridium sporogenes (strain ATCC 7955 / DSM 767 / NBRC 16411 / NCIMB 8053 / NCTC 8594 / PA 3679).